Here is a 690-residue protein sequence, read N- to C-terminus: Protein AC23 (690 aa).

The N-terminal stretch at 1 to 37 (MLACKFSQYQAFIMDGVKLLGTCALIILLSTTSTVVG) is a signal peptide.

The protein localises to the virion. Pathogenicity factor that accelerates mortality in the host insect. This Autographa californica nuclear polyhedrosis virus (AcMNPV) protein is Protein AC23.